The sequence spans 459 residues: Ribulose bisphosphate carboxylase (459 aa).

Substrate is bound at residue asparagine 111. The active-site Proton acceptor is the lysine 166. Residue lysine 168 participates in substrate binding. Mg(2+)-binding residues include lysine 191, aspartate 193, and glutamate 194. Position 191 is an N6-carboxylysine (lysine 191). Catalysis depends on histidine 287, which acts as the Proton acceptor. Positions 288, 321, and 368 each coordinate substrate.

The protein belongs to the RuBisCO large chain family. Type II subfamily. Homodimer. Requires Mg(2+) as cofactor.

It catalyses the reaction 2 (2R)-3-phosphoglycerate + 2 H(+) = D-ribulose 1,5-bisphosphate + CO2 + H2O. The catalysed reaction is D-ribulose 1,5-bisphosphate + O2 = 2-phosphoglycolate + (2R)-3-phosphoglycerate + 2 H(+). RuBisCO catalyzes two reactions: the carboxylation of D-ribulose 1,5-bisphosphate, the primary event in carbon dioxide fixation, as well as the oxidative fragmentation of the pentose substrate. Both reactions occur simultaneously and in competition at the same active site. The chain is Ribulose bisphosphate carboxylase from Albidiferax ferrireducens (strain ATCC BAA-621 / DSM 15236 / T118) (Rhodoferax ferrireducens).